We begin with the raw amino-acid sequence, 410 residues long: Protein BTN2 (410 aa).

2 disordered regions span residues 223–264 (INEP…TKED) and 276–410 (MQEE…IEEI). Basic and acidic residues-rich tracts occupy residues 233 to 264 (SKID…TKED) and 276 to 311 (MQEE…KESL). The stretch at 243-330 (NMSESLKEEE…QQKKLQNSKS (88 aa)) forms a coiled coil. Residues 334-362 (SEIEASNKNNNSNSGSAESDNESINSDSD) show a composition bias toward low complexity. Positions 364–373 (TLDFSVSGNT) are enriched in polar residues.

In terms of assembly, interacts with RHB1, IST2, TDA3 and YIF1.

Its subcellular location is the cytoplasm. It localises to the late endosome. Functionally, V-SNARE binding protein that facilitates specific protein retrieval from a late endosome to the Golgi. Modulates the rate of arginine uptake. Involved in pH homeostasis. Required for the correct localization of IST2. May be involved in ion homeostasis together with IST2. This Saccharomyces cerevisiae (strain ATCC 204508 / S288c) (Baker's yeast) protein is Protein BTN2 (BTN2).